Consider the following 30-residue polypeptide: Diuretic hormone 2 (30 aa).

The residue at position 30 (Val-30) is a Valine amide.

This sequence belongs to the sauvagine/corticotropin-releasing factor/urotensin I family.

It localises to the secreted. Regulation of fluid secretion. This is Diuretic hormone 2 from Manduca sexta (Tobacco hawkmoth).